A 430-amino-acid chain; its full sequence is Ribosomal protein uS12 methylthiotransferase RimO (430 aa).

Residues 1–116 (MRVGIKVLGC…IANAIENGTD (116 aa)) enclose the MTTase N-terminal domain. [4Fe-4S] cluster-binding residues include Cys10, Cys46, Cys79, Cys148, Cys152, and Cys155. The region spanning 134–365 (LEERPYAYVK…LLQAEISNSR (232 aa)) is the Radical SAM core domain. Residues 367 to 430 (DRFVGKKLKF…DEYDMWGSVI (64 aa)) form the TRAM domain.

This sequence belongs to the methylthiotransferase family. RimO subfamily. It depends on [4Fe-4S] cluster as a cofactor.

It is found in the cytoplasm. The enzyme catalyses L-aspartate(89)-[ribosomal protein uS12]-hydrogen + (sulfur carrier)-SH + AH2 + 2 S-adenosyl-L-methionine = 3-methylsulfanyl-L-aspartate(89)-[ribosomal protein uS12]-hydrogen + (sulfur carrier)-H + 5'-deoxyadenosine + L-methionine + A + S-adenosyl-L-homocysteine + 2 H(+). Catalyzes the methylthiolation of an aspartic acid residue of ribosomal protein uS12. This chain is Ribosomal protein uS12 methylthiotransferase RimO, found in Thermotoga petrophila (strain ATCC BAA-488 / DSM 13995 / JCM 10881 / RKU-1).